The primary structure comprises 525 residues: Bifunctional purine biosynthesis protein PurH (525 aa).

The region spanning 1–147 is the MGS-like domain; that stretch reads MTKIERALIS…KNWAHVAIVT (147 aa).

Belongs to the PurH family.

It catalyses the reaction (6R)-10-formyltetrahydrofolate + 5-amino-1-(5-phospho-beta-D-ribosyl)imidazole-4-carboxamide = 5-formamido-1-(5-phospho-D-ribosyl)imidazole-4-carboxamide + (6S)-5,6,7,8-tetrahydrofolate. It carries out the reaction IMP + H2O = 5-formamido-1-(5-phospho-D-ribosyl)imidazole-4-carboxamide. It participates in purine metabolism; IMP biosynthesis via de novo pathway; 5-formamido-1-(5-phospho-D-ribosyl)imidazole-4-carboxamide from 5-amino-1-(5-phospho-D-ribosyl)imidazole-4-carboxamide (10-formyl THF route): step 1/1. The protein operates within purine metabolism; IMP biosynthesis via de novo pathway; IMP from 5-formamido-1-(5-phospho-D-ribosyl)imidazole-4-carboxamide: step 1/1. The polypeptide is Bifunctional purine biosynthesis protein PurH (Chromobacterium violaceum (strain ATCC 12472 / DSM 30191 / JCM 1249 / CCUG 213 / NBRC 12614 / NCIMB 9131 / NCTC 9757 / MK)).